Here is a 103-residue protein sequence, read N- to C-terminus: Small ribosomal subunit protein uS10 (103 aa).

It belongs to the universal ribosomal protein uS10 family. Part of the 30S ribosomal subunit.

Involved in the binding of tRNA to the ribosomes. The polypeptide is Small ribosomal subunit protein uS10 (Campylobacter jejuni subsp. jejuni serotype O:6 (strain 81116 / NCTC 11828)).